The chain runs to 383 residues: S-adenosylmethionine synthase (383 aa).

Residue H22 participates in ATP binding. D24 contacts Mg(2+). E50 contacts K(+). L-methionine is bound by residues E63 and Q99. The interval Q99–K109 is flexible loop. Residues D160–K162, D235, R241–K242, S258, and K262 contribute to the ATP site. L-methionine is bound at residue D235. Position 266 (K266) interacts with L-methionine.

It belongs to the AdoMet synthase family. Homotetramer; dimer of dimers. Mg(2+) is required as a cofactor. Requires K(+) as cofactor.

The protein localises to the cytoplasm. The catalysed reaction is L-methionine + ATP + H2O = S-adenosyl-L-methionine + phosphate + diphosphate. It functions in the pathway amino-acid biosynthesis; S-adenosyl-L-methionine biosynthesis; S-adenosyl-L-methionine from L-methionine: step 1/1. Functionally, catalyzes the formation of S-adenosylmethionine (AdoMet) from methionine and ATP. The overall synthetic reaction is composed of two sequential steps, AdoMet formation and the subsequent tripolyphosphate hydrolysis which occurs prior to release of AdoMet from the enzyme. This is S-adenosylmethionine synthase from Mycoplasma genitalium (strain ATCC 33530 / DSM 19775 / NCTC 10195 / G37) (Mycoplasmoides genitalium).